We begin with the raw amino-acid sequence, 66 residues long: Large ribosomal subunit protein bL35 (66 aa).

Belongs to the bacterial ribosomal protein bL35 family.

The polypeptide is Large ribosomal subunit protein bL35 (Thermodesulfovibrio yellowstonii (strain ATCC 51303 / DSM 11347 / YP87)).